The sequence spans 1426 residues: Ferlin 2 (1426 aa).

5 C2 domains span residues 1–111 (MGKT…QIRK), 161–279 (RKAV…PRWF), 512–638 (EKSK…ESPT), 1031–1154 (SEDR…QKSM), and 1189–1318 (KAGE…TLNS). The interval 1357 to 1377 (SKPVGLGREPPNRDPRLTTPQ) is disordered. Basic and acidic residues predominate over residues 1366–1377 (PPNRDPRLTTPQ). The chain crosses the membrane as a helical span at residues 1404-1424 (VAAVVFLSIWIFVVAFLYPSL).

This sequence belongs to the ferlin family.

Its subcellular location is the membrane. It localises to the inner membrane complex. The protein resides in the cytoplasmic vesicle. It is found in the secretory vesicle. The protein localises to the rhoptry. Functionally, regulates rhoptry secretion. Required for completing the lytic cycle. Required for host cell invasion. Not required for microneme secretion and conoid extrusion. The protein is Ferlin 2 of Toxoplasma gondii.